We begin with the raw amino-acid sequence, 297 residues long: Aspartate carbamoyltransferase catalytic subunit (297 aa).

Residues R49 and T50 each coordinate carbamoyl phosphate. Position 77 (K77) interacts with L-aspartate. Positions 99, 129, and 132 each coordinate carbamoyl phosphate. L-aspartate is bound by residues R162 and R215. Residues G256 and P257 each contribute to the carbamoyl phosphate site.

The protein belongs to the aspartate/ornithine carbamoyltransferase superfamily. ATCase family. In terms of assembly, heterododecamer (2C3:3R2) of six catalytic PyrB chains organized as two trimers (C3), and six regulatory PyrI chains organized as three dimers (R2).

It catalyses the reaction carbamoyl phosphate + L-aspartate = N-carbamoyl-L-aspartate + phosphate + H(+). The protein operates within pyrimidine metabolism; UMP biosynthesis via de novo pathway; (S)-dihydroorotate from bicarbonate: step 2/3. Catalyzes the condensation of carbamoyl phosphate and aspartate to form carbamoyl aspartate and inorganic phosphate, the committed step in the de novo pyrimidine nucleotide biosynthesis pathway. The sequence is that of Aspartate carbamoyltransferase catalytic subunit from Legionella pneumophila (strain Corby).